The primary structure comprises 147 residues: MYPAHLLVLSAVCVSLLGAANIPPHPLNLINFMEMIRYTIPCEKTWGEYTNYGCYCGAGGSGRPIDALDRCCYVHDNCYGDAANIRDCNPKTQSYSYKLTKRTIICYGAAGTCARVVCDCDRTAALCFGDSEYIEGHKNIDTARFCQ.

Residues 1 to 19 (MYPAHLLVLSAVCVSLLGA) form the signal peptide. Residues 20–27 (ANIPPHPL) constitute a propeptide that is removed on maturation. 6 disulfide bridges follow: Cys-54–Cys-146, Cys-56–Cys-72, Cys-71–Cys-127, Cys-78–Cys-120, Cys-88–Cys-113, and Cys-106–Cys-118. Residues Tyr-55, Gly-57, and Gly-59 each coordinate Ca(2+). The active site involves His-75. A Ca(2+)-binding site is contributed by Asp-76. Asp-121 is a catalytic residue.

This sequence belongs to the phospholipase A2 family. Group I subfamily. D49 sub-subfamily. As to quaternary structure, heterodimer; disulfide-linked. The A chains have phospholipase A2 activity and the B chains show homology with the basic protease inhibitors. The A3 chain is found in beta-5 bungarotoxins. Ca(2+) is required as a cofactor. In terms of tissue distribution, expressed by the venom gland.

The protein resides in the secreted. The catalysed reaction is a 1,2-diacyl-sn-glycero-3-phosphocholine + H2O = a 1-acyl-sn-glycero-3-phosphocholine + a fatty acid + H(+). Functionally, snake venom phospholipase A2 (PLA2) that inhibits neuromuscular transmission by blocking acetylcholine release from the nerve termini. PLA2 catalyzes the calcium-dependent hydrolysis of the 2-acyl groups in 3-sn-phosphoglycerides. This chain is Acidic phospholipase A2 beta-bungarotoxin A3 chain, found in Bungarus multicinctus (Many-banded krait).